We begin with the raw amino-acid sequence, 1037 residues long: Ribonuclease E (1037 aa).

3 disordered regions span residues methionine 1–arginine 23, phenylalanine 47–valine 90, and valine 106–serine 369. The segment covering phenylalanine 47–arginine 67 has biased composition (basic and acidic residues). 2 stretches are compositionally biased toward low complexity: residues alanine 68–valine 90 and valine 106–glutamate 126. Composition is skewed to acidic residues over residues alanine 127–threonine 141 and valine 196–glutamine 226. A compositionally biased stretch (basic residues) spans proline 230–arginine 242. Positions asparagine 248–threonine 284 are enriched in acidic residues. The segment covering arginine 291 to serine 301 has biased composition (basic residues). A compositionally biased stretch (basic and acidic residues) spans valine 320–aspartate 335. The S1 motif domain maps to glycine 427 to glutamine 504. Positions glutamate 561–alanine 589 form a coiled coil. The Mg(2+) site is built by aspartate 694 and aspartate 738. Zn(2+)-binding residues include cysteine 796 and cysteine 799. The segment at proline 810 to aspartate 1037 is disordered. The span at arginine 834–alanine 843 shows a compositional bias: basic residues. The span at alanine 844–methionine 864 shows a compositional bias: basic and acidic residues. The segment covering glutamate 879–glutamate 891 has biased composition (acidic residues). Over residues glutamate 897 to histidine 913 the composition is skewed to basic and acidic residues. The span at glycine 923–proline 1006 shows a compositional bias: acidic residues.

It belongs to the RNase E/G family. In terms of assembly, assembles into a homotetramer formed by a dimer of dimers. Interacts with DNA-binding protein HhupB. The cofactor is Mg(2+). Zn(2+) serves as cofactor.

The protein localises to the cytoplasm. The catalysed reaction is Endonucleolytic cleavage of single-stranded RNA in A- and U-rich regions.. Its function is as follows. Endoribonuclease that plays a central role in RNA processing and decay. Plays a major role in pre-16S rRNA maturation, probably generating the mature 5'-end, and a minor role in pre-5S and pre-23S rRNA maturation. Probably also processes tRNA. RNase E and HupB jointly contribute to cellular adaptation to changing growth conditions and survival during antibiotic treatment. Overexpression or depletion leads to changes in gene expression; overexpression induces metabolic slowdown and cell stress while depleted strains grow less well than induced strains. The protein is Ribonuclease E (rne) of Mycolicibacterium smegmatis (strain ATCC 700084 / mc(2)155) (Mycobacterium smegmatis).